A 359-amino-acid chain; its full sequence is 3-dehydroquinate synthase (359 aa).

Residues 72–77 (EGEIHK), 106–110 (GVIGD), 130–131 (TS), lysine 143, lysine 152, and 170–173 (CLKT) each bind NAD(+). Glutamate 185, histidine 248, and histidine 264 together coordinate Zn(2+).

This sequence belongs to the sugar phosphate cyclases superfamily. Dehydroquinate synthase family. Co(2+) serves as cofactor. Zn(2+) is required as a cofactor. Requires NAD(+) as cofactor.

It is found in the cytoplasm. The catalysed reaction is 7-phospho-2-dehydro-3-deoxy-D-arabino-heptonate = 3-dehydroquinate + phosphate. The protein operates within metabolic intermediate biosynthesis; chorismate biosynthesis; chorismate from D-erythrose 4-phosphate and phosphoenolpyruvate: step 2/7. Functionally, catalyzes the conversion of 3-deoxy-D-arabino-heptulosonate 7-phosphate (DAHP) to dehydroquinate (DHQ). This is 3-dehydroquinate synthase from Dehalococcoides mccartyi (strain CBDB1).